The chain runs to 1572 residues: Dynein axonemal assembly factor 8 (1572 aa).

Disordered regions lie at residues 1–21 (MASEQDGFLPAATRGDSNWSG), 262–304 (SEEV…HPQS), 324–428 (SLEQ…EILQ), and 849–871 (FQNPYSRSTQPRSANLRSRSDSE). A compositionally biased stretch (polar residues) spans 324–335 (SLEQNPENPSQR). The segment covering 336-351 (NEQKEKHHLNKTDHTG) has biased composition (basic and acidic residues). Over residues 361–374 (NIQNDSLSDANMSN) the composition is skewed to polar residues. Over residues 409 to 426 (VGREEKDGREEQEKEKEI) the composition is skewed to basic and acidic residues. Residues 849–865 (FQNPYSRSTQPRSANLR) show a composition bias toward polar residues. Positions 1249–1382 (TVLLLKPRIW…IRDIKTFFPE (134 aa)) are NDK.

As to quaternary structure, interacts with DNAI2. In terms of tissue distribution, expression is enriched in multiciliated cells in the epidermis and the nephrostomes of the pronephros.

It localises to the dynein axonemal particle. The protein localises to the cytoplasm. In terms of biological role, in cyliated cells, dynein axonemal particle-specific protein required for deployment of ODA to the axoneme. Interacts with outer dynein arm (ODA) subunits. In Xenopus laevis (African clawed frog), this protein is Dynein axonemal assembly factor 8 (dnaaf8).